A 282-amino-acid chain; its full sequence is Putative phosphoenolpyruvate synthase regulatory protein (282 aa).

162–169 (GVSRSGKT) is an ADP binding site.

This sequence belongs to the pyruvate, phosphate/water dikinase regulatory protein family. PSRP subfamily.

It catalyses the reaction [pyruvate, water dikinase] + ADP = [pyruvate, water dikinase]-phosphate + AMP + H(+). It carries out the reaction [pyruvate, water dikinase]-phosphate + phosphate + H(+) = [pyruvate, water dikinase] + diphosphate. In terms of biological role, bifunctional serine/threonine kinase and phosphorylase involved in the regulation of the phosphoenolpyruvate synthase (PEPS) by catalyzing its phosphorylation/dephosphorylation. The protein is Putative phosphoenolpyruvate synthase regulatory protein of Psychrobacter arcticus (strain DSM 17307 / VKM B-2377 / 273-4).